The chain runs to 336 residues: Toluate 1,2-dioxygenase electron transfer component (336 aa).

One can recognise a 2Fe-2S ferredoxin-type domain in the interval 3-97; sequence HKVATDFEDG…DCVIRVPAAS (95 aa). 4 residues coordinate [2Fe-2S] cluster: C40, C45, C48, and C81. Positions 99 to 336 are ferredoxin-reductase; sequence VCKTQQAGYQ…FYYEKFAASA (238 aa). In terms of domain architecture, FAD-binding FR-type spans 104–204; that stretch reads QAGYQAAISN…AGPLGAFYLR (101 aa).

It belongs to the bacterial ring-hydroxylating dioxygenase ferredoxin reductase family. As to quaternary structure, this dioxygenase system consists of three proteins: the two subunits of the hydroxylase component (XylX and XylY), and an electron transfer component (XylZ). The cofactor is FAD. [2Fe-2S] cluster serves as cofactor.

It catalyses the reaction 2 reduced [2Fe-2S]-[ferredoxin] + NAD(+) + H(+) = 2 oxidized [2Fe-2S]-[ferredoxin] + NADH. In terms of biological role, electron transfer component of toluate 1,2-dioxygenase system. This Pseudomonas putida (Arthrobacter siderocapsulatus) protein is Toluate 1,2-dioxygenase electron transfer component (xylZ).